The following is a 92-amino-acid chain: Small ribosomal subunit protein bS18 (92 aa).

Residues 1-28 (MTQQGNSGERKPRGKGPKRPRKPKVDPF) form a disordered region. Basic residues predominate over residues 12-22 (PRGKGPKRPRK).

Belongs to the bacterial ribosomal protein bS18 family. Part of the 30S ribosomal subunit. Forms a tight heterodimer with protein bS6.

Binds as a heterodimer with protein bS6 to the central domain of the 16S rRNA, where it helps stabilize the platform of the 30S subunit. The sequence is that of Small ribosomal subunit protein bS18 from Deinococcus radiodurans (strain ATCC 13939 / DSM 20539 / JCM 16871 / CCUG 27074 / LMG 4051 / NBRC 15346 / NCIMB 9279 / VKM B-1422 / R1).